A 168-amino-acid polypeptide reads, in one-letter code: Transcription antitermination protein NusB (168 aa).

Belongs to the NusB family.

Functionally, involved in transcription antitermination. Required for transcription of ribosomal RNA (rRNA) genes. Binds specifically to the boxA antiterminator sequence of the ribosomal RNA (rrn) operons. In Chlamydia trachomatis serovar D (strain ATCC VR-885 / DSM 19411 / UW-3/Cx), this protein is Transcription antitermination protein NusB.